A 206-amino-acid chain; its full sequence is Imidazoleglycerol-phosphate dehydratase (206 aa).

The protein belongs to the imidazoleglycerol-phosphate dehydratase family.

Its subcellular location is the cytoplasm. It carries out the reaction D-erythro-1-(imidazol-4-yl)glycerol 3-phosphate = 3-(imidazol-4-yl)-2-oxopropyl phosphate + H2O. Its pathway is amino-acid biosynthesis; L-histidine biosynthesis; L-histidine from 5-phospho-alpha-D-ribose 1-diphosphate: step 6/9. In Mycolicibacterium smegmatis (strain ATCC 700084 / mc(2)155) (Mycobacterium smegmatis), this protein is Imidazoleglycerol-phosphate dehydratase.